We begin with the raw amino-acid sequence, 616 residues long: Dihydroxy-acid dehydratase (616 aa).

Aspartate 81 lines the Mg(2+) pocket. Cysteine 122 is a [2Fe-2S] cluster binding site. Aspartate 123 and lysine 124 together coordinate Mg(2+). N6-carboxylysine is present on lysine 124. Cysteine 195 contributes to the [2Fe-2S] cluster binding site. Glutamate 491 is a binding site for Mg(2+). The active-site Proton acceptor is serine 517.

The protein belongs to the IlvD/Edd family. In terms of assembly, homodimer. [2Fe-2S] cluster is required as a cofactor. It depends on Mg(2+) as a cofactor.

The enzyme catalyses (2R)-2,3-dihydroxy-3-methylbutanoate = 3-methyl-2-oxobutanoate + H2O. It catalyses the reaction (2R,3R)-2,3-dihydroxy-3-methylpentanoate = (S)-3-methyl-2-oxopentanoate + H2O. Its pathway is amino-acid biosynthesis; L-isoleucine biosynthesis; L-isoleucine from 2-oxobutanoate: step 3/4. It participates in amino-acid biosynthesis; L-valine biosynthesis; L-valine from pyruvate: step 3/4. Its function is as follows. Functions in the biosynthesis of branched-chain amino acids. Catalyzes the dehydration of (2R,3R)-2,3-dihydroxy-3-methylpentanoate (2,3-dihydroxy-3-methylvalerate) into 2-oxo-3-methylpentanoate (2-oxo-3-methylvalerate) and of (2R)-2,3-dihydroxy-3-methylbutanoate (2,3-dihydroxyisovalerate) into 2-oxo-3-methylbutanoate (2-oxoisovalerate), the penultimate precursor to L-isoleucine and L-valine, respectively. The sequence is that of Dihydroxy-acid dehydratase from Escherichia coli (strain SMS-3-5 / SECEC).